The primary structure comprises 468 residues: 6-phospho-beta-galactosidase (468 aa).

The D-galactose 6-phosphate site is built by glutamine 19, histidine 116, asparagine 159, glutamate 160, and asparagine 297. The active-site Proton donor is the glutamate 160. Glutamate 375 (nucleophile) is an active-site residue. Residues serine 428, tryptophan 429, lysine 435, and tyrosine 437 each contribute to the D-galactose 6-phosphate site.

This sequence belongs to the glycosyl hydrolase 1 family.

It catalyses the reaction a 6-phospho-beta-D-galactoside + H2O = D-galactose 6-phosphate + an alcohol. It participates in carbohydrate metabolism; lactose degradation; D-galactose 6-phosphate and beta-D-glucose from lactose 6-phosphate: step 1/1. The polypeptide is 6-phospho-beta-galactosidase (Streptococcus pyogenes serotype M1).